Reading from the N-terminus, the 800-residue chain is Phenylalanine--tRNA ligase beta subunit (800 aa).

A tRNA-binding domain is found at 39 to 154 (TKDIKNLVVG…EAQVPGTDAL (116 aa)). Positions 408–483 (AFITPIDITA…RIYGYDDIPS (76 aa)) constitute a B5 domain. Mg(2+) is bound by residues Asp461, Asp467, Glu470, and Glu471. The region spanning 708–800 (PRFPGMSRDI…ALIEQGAVIR (93 aa)) is the FDX-ACB domain.

It belongs to the phenylalanyl-tRNA synthetase beta subunit family. Type 1 subfamily. Tetramer of two alpha and two beta subunits. It depends on Mg(2+) as a cofactor.

It is found in the cytoplasm. The enzyme catalyses tRNA(Phe) + L-phenylalanine + ATP = L-phenylalanyl-tRNA(Phe) + AMP + diphosphate + H(+). The polypeptide is Phenylalanine--tRNA ligase beta subunit (Staphylococcus aureus (strain COL)).